The primary structure comprises 124 residues: Fluoride-specific ion channel FluC (124 aa).

4 consecutive transmembrane segments (helical) span residues 4-24 (IVLL…LAGL), 35-55 (LGTF…WGVC), 67-87 (VVLL…TFES), and 96-116 (WLAF…LLWL). Na(+)-binding residues include Gly75 and Thr78.

It belongs to the fluoride channel Fluc/FEX (TC 1.A.43) family.

Its subcellular location is the cell inner membrane. It carries out the reaction fluoride(in) = fluoride(out). Its activity is regulated as follows. Na(+) is not transported, but it plays an essential structural role and its presence is essential for fluoride channel function. Functionally, fluoride-specific ion channel. Important for reducing fluoride concentration in the cell, thus reducing its toxicity. In Nitratidesulfovibrio vulgaris (strain DSM 19637 / Miyazaki F) (Desulfovibrio vulgaris), this protein is Fluoride-specific ion channel FluC.